The sequence spans 328 residues: Lactamase-like protein nscB (328 aa).

His97, His99, Asp101, and His102 together coordinate Zn(2+). Residue Asp101 is the Proton donor/acceptor of the active site.

The protein belongs to the metallo-beta-lactamase superfamily. Zn(2+) is required as a cofactor.

The protein operates within secondary metabolite biosynthesis. In terms of biological role, lactamase-like protein; part of the gene cluster that mediates the biosynthesis of neosartoricin, a prenylated anthracenone that exhibits T-cell antiproliferative activity, suggestive of a physiological role as an immunosuppressive agent. The non-reducing polyketide synthase nscA probably synthesizes and cyclizes the decaketide backbone. The hydrolase nscB then mediates the product release through hydrolysis followed by spontaneous decarboxylation. The prenyltransferase nscD catalyzes the addition of the dimethylallyl group to the aromatic C5. The FAD-dependent monooxygenase nscC is then responsible for the stereospecific hydroxylation at C2. There is no gene encoding O-acetyltransferase in the nsc gene cluster; thus, the last step of 2-O-acetylation leading to neosartoricin may be catalyzed by an unidentified O-acetyltransferase. The protein is Lactamase-like protein nscB of Neosartorya fischeri (strain ATCC 1020 / DSM 3700 / CBS 544.65 / FGSC A1164 / JCM 1740 / NRRL 181 / WB 181) (Aspergillus fischerianus).